The chain runs to 932 residues: Serotype-specific antigen 1 (932 aa).

The first 24 residues, 1-24 (MYKIKHSFNKTLIAISISSFLSIA), serve as a signal peptide directing secretion. A Peptidase S8 domain is found at 25–407 (YATESIENPQ…WGLINLKKAV (383 aa)). Residues Asp-58, His-116, and Ser-351 each act as charge relay system in the active site. An Autotransporter domain is found at 669-932 (HTPLQTTVWA…PIWLESKCWL (264 aa)).

The protein belongs to the peptidase S8 family.

It localises to the cell outer membrane. In Mannheimia haemolytica (Pasteurella haemolytica), this protein is Serotype-specific antigen 1 (ssa1).